The sequence spans 245 residues: Uridylate kinase (245 aa).

12-15 lines the ATP pocket; that stretch reads KISG. Gly55 contributes to the UMP binding site. ATP is bound by residues Gly56 and Arg60. UMP contacts are provided by residues Asp76 and 137 to 144; that span reads AGAPYLTT. ATP-binding residues include Thr164, Tyr171, and Asp174.

It belongs to the UMP kinase family. As to quaternary structure, homohexamer.

It is found in the cytoplasm. It catalyses the reaction UMP + ATP = UDP + ADP. It functions in the pathway pyrimidine metabolism; CTP biosynthesis via de novo pathway; UDP from UMP (UMPK route): step 1/1. Inhibited by UTP. Catalyzes the reversible phosphorylation of UMP to UDP. The sequence is that of Uridylate kinase from Chlamydia trachomatis serovar A (strain ATCC VR-571B / DSM 19440 / HAR-13).